Here is a 359-residue protein sequence, read N- to C-terminus: 3-dehydroquinate synthase (359 aa).

NAD(+)-binding positions include 71–76, 105–109, 129–130, Lys142, and Lys151; these read DGEAYK, GVIGD, and TT. Zn(2+) is bound by residues Glu184, His247, and His264.

Belongs to the sugar phosphate cyclases superfamily. Dehydroquinate synthase family. The cofactor is Co(2+). Requires Zn(2+) as cofactor. NAD(+) serves as cofactor.

The protein localises to the cytoplasm. It carries out the reaction 7-phospho-2-dehydro-3-deoxy-D-arabino-heptonate = 3-dehydroquinate + phosphate. The protein operates within metabolic intermediate biosynthesis; chorismate biosynthesis; chorismate from D-erythrose 4-phosphate and phosphoenolpyruvate: step 2/7. Functionally, catalyzes the conversion of 3-deoxy-D-arabino-heptulosonate 7-phosphate (DAHP) to dehydroquinate (DHQ). The sequence is that of 3-dehydroquinate synthase from Burkholderia multivorans (strain ATCC 17616 / 249).